An 886-amino-acid chain; its full sequence is Kinesin-like protein KIF18A (886 aa).

Residues 11–355 form the Kinesin motor domain; the sequence is RMKVVVRVRP…LKYANRAKEI (345 aa). K24 is covalently cross-linked (Glycyl lysine isopeptide (Lys-Gly) (interchain with G-Cter in SUMO2)). 113-120 lines the ATP pocket; the sequence is GATGSGKT. Residues 370 to 404 adopt a coiled-coil conformation; sequence ISQYVKICNMQKAEILMLKEKLKAYEEQKALSDRN. A Phosphoserine modification is found at S674. K683 participates in a covalent cross-link: Glycyl lysine isopeptide (Lys-Gly) (interchain with G-Cter in SUMO2). The residue at position 695 (S695) is a Phosphoserine. A disordered region spans residues 774–804; the sequence is EQEPLASSKSSVHRIESSSFSTKDSMPESAG. K782 is covalently cross-linked (Glycyl lysine isopeptide (Lys-Gly) (interchain with G-Cter in SUMO2)). Position 826 is a phosphoserine (S826). Residue K862 forms a Glycyl lysine isopeptide (Lys-Gly) (interchain with G-Cter in SUMO2) linkage. The interval 862–886 is disordered; that stretch reads KRNTNKTNSNMLRKFRRNTSKENVQ.

It belongs to the TRAFAC class myosin-kinesin ATPase superfamily. Kinesin family. As to quaternary structure, interacts with CENPE and ESR1. Glycosylated. In terms of processing, ubiquitinated.

The protein localises to the cell projection. It is found in the ruffle. Its subcellular location is the cytoplasm. It localises to the nucleus. The protein resides in the cytoskeleton. The protein localises to the microtubule organizing center. It is found in the centrosome. Its function is as follows. Microtubule-depolymerizing kinesin which plays a role in chromosome congression by reducing the amplitude of preanaphase oscillations and slowing poleward movement during anaphase, thus suppressing chromosome movements. May stabilize the CENPE-BUB1B complex at the kinetochores during early mitosis and maintains CENPE levels at kinetochores during chromosome congression. The chain is Kinesin-like protein KIF18A (Kif18a) from Mus musculus (Mouse).